The following is a 210-amino-acid chain: Selenoprotein T2 (210 aa).

The first 21 residues, 1-21, serve as a signal peptide directing secretion; sequence MAEYSQTGILTALLLFTVVTV. Positions 62-65 form a cross-link, cysteinyl-selenocysteine (Cys-Sec); sequence CISU. Selenocysteine 65 is a non-standard amino acid (selenocysteine).

This sequence belongs to the SelWTH family. Selenoprotein T subfamily. In terms of processing, may contain a selenide-sulfide bond between Cys-62 and Sec-65. This bond is speculated to serve as redox-active pair. As to expression, widely expressed in the embryo.

This chain is Selenoprotein T2, found in Danio rerio (Zebrafish).